Here is a 389-residue protein sequence, read N- to C-terminus: Phospho-N-acetylmuramoyl-pentapeptide-transferase (389 aa).

10 helical membrane-spanning segments follow: residues 21–41 (FITFRAVFATLTALVIGLVTG), 70–90 (GTPTMGGVLILVSIGISTLLW), 97–117 (FIWVVLIVTLGFGAVGWVDDY), 134–154 (YMWQSIIGLFAAIYLAFSVSA), 189–209 (TISYPLGVWGFIALTYFVIVG), 222–242 (GLAIMPTVMVGTALGLFAYLT), 259–279 (AGELIIFCGAMAGAGLAFLWF), 286–306 (VFMGDVGALALGGALGTIAVI), 311–331 (VVLFIMGGIFVVETLSVMLQV), and 366–386 (QVVVRFWIITMMLVLFGLSTL).

This sequence belongs to the glycosyltransferase 4 family. MraY subfamily. It depends on Mg(2+) as a cofactor.

Its subcellular location is the cell inner membrane. It catalyses the reaction UDP-N-acetyl-alpha-D-muramoyl-L-alanyl-gamma-D-glutamyl-meso-2,6-diaminopimeloyl-D-alanyl-D-alanine + di-trans,octa-cis-undecaprenyl phosphate = di-trans,octa-cis-undecaprenyl diphospho-N-acetyl-alpha-D-muramoyl-L-alanyl-D-glutamyl-meso-2,6-diaminopimeloyl-D-alanyl-D-alanine + UMP. It functions in the pathway cell wall biogenesis; peptidoglycan biosynthesis. Catalyzes the initial step of the lipid cycle reactions in the biosynthesis of the cell wall peptidoglycan: transfers peptidoglycan precursor phospho-MurNAc-pentapeptide from UDP-MurNAc-pentapeptide onto the lipid carrier undecaprenyl phosphate, yielding undecaprenyl-pyrophosphoryl-MurNAc-pentapeptide, known as lipid I. This chain is Phospho-N-acetylmuramoyl-pentapeptide-transferase, found in Janthinobacterium sp. (strain Marseille) (Minibacterium massiliensis).